The following is a 267-amino-acid chain: Myxobacterial hemagglutinin (267 aa).

A run of 4 repeats spans residues 1 to 66 (MAAY…GTLS), 67 to 133 (SANN…SEVT), 134 to 200 (DGDT…GTLT), and 201 to 267 (SPDT…ARLG). The segment at 1-267 (MAAYLVQNQW…GPIGFRARLG (267 aa)) is 4 X 65 AA tandem repeats.

It belongs to the bacterial lectin family.

Functionally, this lectin might have a role in the differentiation of cells. The chain is Myxobacterial hemagglutinin (mbhA) from Myxococcus xanthus.